Consider the following 245-residue polypeptide: MPHQLWFTAFLNQYLAGPVSAMMSVLHVPNPHPRAPISNYVAMEILVFLLLVLFFIATRISLSWDKPGVLQHIAEGMNNFVSNQGEEMIGHGYETYTSYIVTLGVFILSMNLIGLIPGFEAPTAFPSVPLGCALVTWFFYHVHGLRENGVIGYLKHFLGPVWWISPLLFVIEICSHFARIMSLTIRLYANMFAGDMVTLAFFSLVPLGFPVVFMGLHIFVSLIQTYIFITLAAVYLAEATAHGHD.

7 consecutive transmembrane segments (helical) span residues 5 to 25, 37 to 57, 99 to 119, 125 to 145, 157 to 177, 187 to 209, and 221 to 241; these read LWFT…MMSV, ISNY…FFIA, YIVT…IPGF, FPSV…VHGL, FLGP…CSHF, LYAN…PLGF, and SLIQ…EATA.

It belongs to the ATPase A chain family. F-type ATPases have 2 components, CF(1) - the catalytic core - and CF(0) - the membrane proton channel. CF(1) has five subunits: alpha(3), beta(3), gamma(1), delta(1), epsilon(1). CF(0) has three main subunits: a(1), b(2) and c(9-12). The alpha and beta chains form an alternating ring which encloses part of the gamma chain. CF(1) is attached to CF(0) by a central stalk formed by the gamma and epsilon chains, while a peripheral stalk is formed by the delta and b chains.

The protein resides in the cell inner membrane. Functionally, key component of the proton channel; it plays a direct role in the translocation of protons across the membrane. The protein is ATP synthase subunit a of Koribacter versatilis (strain Ellin345).